The following is a 314-amino-acid chain: Solute carrier family 25 member 44 (314 aa).

Solcar repeat units follow at residues 18-100 (KKFY…TRKF), 107-210 (SNTV…YAEQ), and 220-302 (PHIV…LKKL). 6 helical membrane-spanning segments follow: residues 20–42 (FYVF…TLIR), 71–90 (TGLY…GQCY), 113–133 (LVAG…IDVV), 185–201 (GYVA…AVWW), 222–239 (IVFQ…ASIL), and 278–296 (LSAR…VVGY).

This sequence belongs to the mitochondrial carrier (TC 2.A.29) family.

It localises to the mitochondrion membrane. It carries out the reaction L-valine(in) = L-valine(out). The enzyme catalyses L-leucine(in) = L-leucine(out). In terms of biological role, mitochondrial solute transporter which transports branched-chain amino acid (BCAA; valine, leucine and isoleucine) into mitochondria in brown adipose tissue (BAT). BAT is involved in BCAA catabolism and actively utilizes BCAA in the mitochondria for thermogenesis. This Pongo abelii (Sumatran orangutan) protein is Solute carrier family 25 member 44.